A 277-amino-acid chain; its full sequence is Carbonyl reductase [NADPH] 3 (277 aa).

Residue S2 is modified to N-acetylserine. Residues 10–34 (VTGA…GDVV), 38–42 (RDVAR), 63–64 (DI), and N90 each bind NADP(+). S30 carries the post-translational modification Phosphoserine. S140 is a binding site for substrate. Residue Y194 is the Proton acceptor of the active site. NADP(+) is bound by residues 194–198 (YGVSK) and D239.

The protein belongs to the short-chain dehydrogenases/reductases (SDR) family. As to expression, detected in ovary, pancreas, intestine, colon, kidney, brain, thymus, lung, heart, liver, spleen, leukocyte, prostate and testis.

Its subcellular location is the cytoplasm. The catalysed reaction is a secondary alcohol + NADP(+) = a ketone + NADPH + H(+). It catalyses the reaction a quinone + NADPH + H(+) = a quinol + NADP(+). Its function is as follows. Catalyzes the NADPH-dependent reduction of carbonyl compounds to their corresponding alcohols. Has low NADPH-dependent oxidoreductase activity. Acts on several orthoquinones, acts as well on non-quinone compounds, such as isatin or on the anticancer drug oracin. Best substrates for CBR3 is 1,2- naphthoquinone, hence could play a role in protection against cytotoxicity of exogenous quinones. Exerts activity toward ortho-quinones but not paraquinones. No endogenous substrate for CBR3 except isatin has been identified. The protein is Carbonyl reductase [NADPH] 3 of Homo sapiens (Human).